Here is a 219-residue protein sequence, read N- to C-terminus: ATP synthase F(0) complex subunit a (219 aa).

The next 6 membrane-spanning stretches (helical) occupy residues 4–24 (PTYL…ILFP), 61–81 (WAAL…LGLL), 90–110 (QLSL…IIGM), 124–144 (EGTP…SLFI), 172–192 (FVLL…LFLL), and 194–214 (LLEI…LSLY).

It belongs to the ATPase A chain family. Component of the ATP synthase complex composed at least of ATP5F1A/subunit alpha, ATP5F1B/subunit beta, ATP5MC1/subunit c (homooctomer), MT-ATP6/subunit a, MT-ATP8/subunit 8, ATP5ME/subunit e, ATP5MF/subunit f, ATP5MG/subunit g, ATP5MK/subunit k, ATP5MJ/subunit j, ATP5F1C/subunit gamma, ATP5F1D/subunit delta, ATP5F1E/subunit epsilon, ATP5PF/subunit F6, ATP5PB/subunit b, ATP5PD/subunit d, ATP5PO/subunit OSCP. ATP synthase complex consists of a soluble F(1) head domain (subunits alpha(3) and beta(3)) - the catalytic core - and a membrane F(0) domain - the membrane proton channel (subunits c, a, 8, e, f, g, k and j). These two domains are linked by a central stalk (subunits gamma, delta, and epsilon) rotating inside the F1 region and a stationary peripheral stalk (subunits F6, b, d, and OSCP). Interacts with DNAJC30; interaction is direct.

It is found in the mitochondrion inner membrane. The catalysed reaction is H(+)(in) = H(+)(out). Subunit a, of the mitochondrial membrane ATP synthase complex (F(1)F(0) ATP synthase or Complex V) that produces ATP from ADP in the presence of a proton gradient across the membrane which is generated by electron transport complexes of the respiratory chain. ATP synthase complex consist of a soluble F(1) head domain - the catalytic core - and a membrane F(1) domain - the membrane proton channel. These two domains are linked by a central stalk rotating inside the F(1) region and a stationary peripheral stalk. During catalysis, ATP synthesis in the catalytic domain of F(1) is coupled via a rotary mechanism of the central stalk subunits to proton translocation. With the subunit c (ATP5MC1), forms the proton-conducting channel in the F(0) domain, that contains two crucial half-channels (inlet and outlet) that facilitate proton movement from the mitochondrial intermembrane space (IMS) into the matrix. Protons are taken up via the inlet half-channel and released through the outlet half-channel, following a Grotthuss mechanism. This chain is ATP synthase F(0) complex subunit a, found in Oncorhynchus masou (Cherry salmon).